The following is a 356-amino-acid chain: DNA polymerase IV (356 aa).

Residues 6–187 form the UmuC domain; the sequence is IIHIDMDYFF…LDIGDFPGVG (182 aa). Residues D10 and D105 each coordinate Mg(2+). E106 is an active-site residue.

Belongs to the DNA polymerase type-Y family. Monomer. Mg(2+) serves as cofactor.

The protein localises to the cytoplasm. The catalysed reaction is DNA(n) + a 2'-deoxyribonucleoside 5'-triphosphate = DNA(n+1) + diphosphate. Functionally, poorly processive, error-prone DNA polymerase involved in untargeted mutagenesis. Copies undamaged DNA at stalled replication forks, which arise in vivo from mismatched or misaligned primer ends. These misaligned primers can be extended by PolIV. Exhibits no 3'-5' exonuclease (proofreading) activity. May be involved in translesional synthesis, in conjunction with the beta clamp from PolIII. In Staphylococcus aureus (strain MRSA252), this protein is DNA polymerase IV.